Here is a 113-residue protein sequence, read N- to C-terminus: Large ribosomal subunit protein bL17 (113 aa).

This sequence belongs to the bacterial ribosomal protein bL17 family. Part of the 50S ribosomal subunit. Contacts protein L32.

This Clostridium beijerinckii (strain ATCC 51743 / NCIMB 8052) (Clostridium acetobutylicum) protein is Large ribosomal subunit protein bL17.